The sequence spans 110 residues: Protein YcgL (110 aa).

The YcgL domain occupies 14-98 (MFCVIYRSSK…PPEDLLKQHL (85 aa)). The segment at 88–110 (PPPEDLLKQHLSSVGQNTSHADR) is disordered. The span at 97–110 (HLSSVGQNTSHADR) shows a compositional bias: polar residues.

The chain is Protein YcgL from Salmonella typhi.